The chain runs to 385 residues: Alkanesulfonate monooxygenase (385 aa).

The protein belongs to the SsuD family.

It carries out the reaction an alkanesulfonate + FMNH2 + O2 = an aldehyde + FMN + sulfite + H2O + 2 H(+). Its function is as follows. Catalyzes the desulfonation of aliphatic sulfonates. The chain is Alkanesulfonate monooxygenase from Paraburkholderia phymatum (strain DSM 17167 / CIP 108236 / LMG 21445 / STM815) (Burkholderia phymatum).